Here is a 77-residue protein sequence, read N- to C-terminus: Translational regulator CsrA (77 aa).

It belongs to the CsrA/RsmA family. Homodimer; the beta-strands of each monomer intercalate to form a hydrophobic core, while the alpha-helices form wings that extend away from the core.

It is found in the cytoplasm. Its function is as follows. A translational regulator that binds mRNA to regulate translation initiation and/or mRNA stability. Usually binds in the 5'-UTR at or near the Shine-Dalgarno sequence preventing ribosome-binding, thus repressing translation. Its main target seems to be the major flagellin gene, while its function is anatagonized by FliW. In Desulfitobacterium hafniense (strain DSM 10664 / DCB-2), this protein is Translational regulator CsrA.